The primary structure comprises 213 residues: MNTRTKKLPPLRVGIGGPVGSGKTTLLEMLCKAMRAHYDLVVITNDIYTKEDQRLLTVAEALPPERIMGVETGGCPHTAIREDASINLEAVDRMLRQFPEADIVFIESGGDNLAATFSPELSDLTIYVIDVAGGEKIPRKGGPGITKSDLLVVNKTDLAPYVGANLSIMEADTQRMRAHKPYVMGSVKSGKGLREVIDFITERGLLPPMPAQG.

17–24 (GPVGSGKT) provides a ligand contact to GTP.

It belongs to the SIMIBI class G3E GTPase family. UreG subfamily. Homodimer. UreD, UreF and UreG form a complex that acts as a GTP-hydrolysis-dependent molecular chaperone, activating the urease apoprotein by helping to assemble the nickel containing metallocenter of UreC. The UreE protein probably delivers the nickel.

Its subcellular location is the cytoplasm. Facilitates the functional incorporation of the urease nickel metallocenter. This process requires GTP hydrolysis, probably effectuated by UreG. This is Urease accessory protein UreG from Delftia acidovorans (strain DSM 14801 / SPH-1).